The following is a 342-amino-acid chain: Nucleoid-associated protein Sbal223_1817 (342 aa).

This sequence belongs to the YejK family.

It localises to the cytoplasm. Its subcellular location is the nucleoid. This chain is Nucleoid-associated protein Sbal223_1817, found in Shewanella baltica (strain OS223).